The chain runs to 598 residues: NADH-ubiquinone oxidoreductase chain 5 (598 aa).

Transmembrane regions (helical) follow at residues 6–26, 32–52, 84–100, 113–133, 136–156, 241–261, 272–292, 301–320, 325–347, 370–390, 409–429, 456–476, 478–498, and 576–596; these read LTLI…PPII, MILT…PLTI, YTVI…WSIM, MDKF…FISA, LLQL…LISW, TPVS…FLLI, LMLE…ALCA, IIAF…VGLN, AFLH…GSII, TTCM…AGFF, LMVT…LIIM, LAWG…PMKP, IFTM…ISLI, and LNSA…LSLT.

The protein belongs to the complex I subunit 5 family.

Its subcellular location is the mitochondrion inner membrane. It catalyses the reaction a ubiquinone + NADH + 5 H(+)(in) = a ubiquinol + NAD(+) + 4 H(+)(out). Its function is as follows. Core subunit of the mitochondrial membrane respiratory chain NADH dehydrogenase (Complex I) that is believed to belong to the minimal assembly required for catalysis. Complex I functions in the transfer of electrons from NADH to the respiratory chain. The immediate electron acceptor for the enzyme is believed to be ubiquinone. This Petromyzon marinus (Sea lamprey) protein is NADH-ubiquinone oxidoreductase chain 5 (MT-ND5).